We begin with the raw amino-acid sequence, 20 residues long: Cytochrome c oxidase subunit 5B heart, mitochondrial (20 aa).

Positions 1–20 are disordered; it reads XXLKGIPTDEEQATGLEEYA.

The protein belongs to the cytochrome c oxidase subunit 5B family. Component of the cytochrome c oxidase (complex IV, CIV), a multisubunit enzyme composed of 14 subunits. The complex is composed of a catalytic core of 3 subunits MT-CO1, MT-CO2 and MT-CO3, encoded in the mitochondrial DNA, and 11 supernumerary subunits COX4I, COX5A, COX5B, COX6A, COX6B, COX6C, COX7A, COX7B, COX7C, COX8 and NDUFA4, which are encoded in the nuclear genome. The complex exists as a monomer or a dimer and forms supercomplexes (SCs) in the inner mitochondrial membrane with NADH-ubiquinone oxidoreductase (complex I, CI) and ubiquinol-cytochrome c oxidoreductase (cytochrome b-c1 complex, complex III, CIII), resulting in different assemblies (supercomplex SCI(1)III(2)IV(1) and megacomplex MCI(2)III(2)IV(2)).

It is found in the mitochondrion inner membrane. It functions in the pathway energy metabolism; oxidative phosphorylation. Functionally, component of the cytochrome c oxidase, the last enzyme in the mitochondrial electron transport chain which drives oxidative phosphorylation. The respiratory chain contains 3 multisubunit complexes succinate dehydrogenase (complex II, CII), ubiquinol-cytochrome c oxidoreductase (cytochrome b-c1 complex, complex III, CIII) and cytochrome c oxidase (complex IV, CIV), that cooperate to transfer electrons derived from NADH and succinate to molecular oxygen, creating an electrochemical gradient over the inner membrane that drives transmembrane transport and the ATP synthase. Cytochrome c oxidase is the component of the respiratory chain that catalyzes the reduction of oxygen to water. Electrons originating from reduced cytochrome c in the intermembrane space (IMS) are transferred via the dinuclear copper A center (CU(A)) of subunit 2 and heme A of subunit 1 to the active site in subunit 1, a binuclear center (BNC) formed by heme A3 and copper B (CU(B)). The BNC reduces molecular oxygen to 2 water molecules using 4 electrons from cytochrome c in the IMS and 4 protons from the mitochondrial matrix. In Oncorhynchus mykiss (Rainbow trout), this protein is Cytochrome c oxidase subunit 5B heart, mitochondrial.